The sequence spans 119 residues: uncharacterized protein (119 aa).

Positions 1–30 (MCPECFFLMLCFCGYCSSSSSSFRSSPVYG) are cleaved as a signal peptide.

This is an uncharacterized protein from Escherichia coli (strain UTI89 / UPEC).